A 254-amino-acid chain; its full sequence is Probable transcriptional regulator ycf27 (254 aa).

A Response regulatory domain is found at 16-129; that stretch reads KVLIVDDEAS…ELEARIRAVL (114 aa). The residue at position 65 (Asp-65) is a 4-aspartylphosphate. A DNA-binding region (H-T-H motif) is located at residues 85–103; that stretch reads DVPIIMLTALGDVADRITG. A DNA-binding region (ompR/PhoB-type) is located at residues 144–245; it reads SGIINFNFLT…ARGTGYLFQR (102 aa).

It localises to the plastid. The protein localises to the chloroplast. Its function is as follows. Probable promoter-specific protein mediating the interaction between DNA and RNA polymerase. In Guillardia theta (Cryptophyte), this protein is Probable transcriptional regulator ycf27 (ycf27).